The sequence spans 389 residues: Choline/ethanolaminephosphotransferase 1 (389 aa).

A helical transmembrane segment spans residues 40–60 (VFPLWMPPNMITLMGFMFLVT). Position 48 (asparagine 48) interacts with CDP-choline. 2 residues coordinate Mg(2+): aspartate 95 and aspartate 98. A CDP-choline-binding site is contributed by arginine 103. Position 116 (aspartate 116) interacts with Mg(2+). The active-site Proton acceptor is histidine 117. Residue aspartate 120 participates in Mg(2+) binding. A run of 7 helical transmembrane segments spans residues 141–161 (TFWF…EHYF), 176–196 (GLAL…EWWA), 221–241 (VLYM…VTNV), 252–272 (MVLA…VLIW), 280–300 (LIAT…GFLV), 322–344 (SLLY…GVPL), and 350–370 (VLLG…TSVI).

It belongs to the CDP-alcohol phosphatidyltransferase class-I family. Mg(2+) serves as cofactor. Requires Mn(2+) as cofactor.

The protein resides in the membrane. The catalysed reaction is CDP-ethanolamine + a 1,2-diacyl-sn-glycerol = a 1,2-diacyl-sn-glycero-3-phosphoethanolamine + CMP + H(+). It carries out the reaction CDP-choline + a 1,2-diacyl-sn-glycerol = a 1,2-diacyl-sn-glycero-3-phosphocholine + CMP + H(+). It participates in phospholipid metabolism; phosphatidylethanolamine biosynthesis; phosphatidylethanolamine from ethanolamine: step 3/3. The protein operates within phospholipid metabolism; phosphatidylcholine biosynthesis; phosphatidylcholine from phosphocholine: step 2/2. Catalyzes both phosphatidylcholine and phosphatidylethanolamine biosynthesis from CDP-choline and CDP-ethanolamine, respectively. Has a higher cholinephosphotransferase activity than ethanolaminephosphotransferase activity. The chain is Choline/ethanolaminephosphotransferase 1 (AAPT1) from Arabidopsis thaliana (Mouse-ear cress).